Consider the following 457-residue polypeptide: Putative F-box protein At3g58860 (457 aa).

The F-box domain occupies Met6–Ser54.

This Arabidopsis thaliana (Mouse-ear cress) protein is Putative F-box protein At3g58860.